Reading from the N-terminus, the 691-residue chain is Protein 4.2 (691 aa).

Residue Gly2 is the site of N-myristoyl glycine attachment. The tract at residues 31 to 39 (LTLRRGQSF) is band 3 binding. Ser248 is subject to Phosphoserine. Tyr570 is modified (phosphotyrosine).

The protein belongs to the transglutaminase superfamily. Transglutaminase family. As to quaternary structure, component of the ankyrin-1 complex in the erythrocyte, composed of ANK1, RHCE, RHAG, SLC4A1, EPB42, GYPA, GYPB and AQP1. Interacts with SLC4A1 (via the cytoplasmic domain); this interaction is mediated by the SLC4A1 Band 3-I dimer. Interacts with ANK1 (via ANK 1-13 repeats). Interacts with AQP1 (via the C-terminal).

It localises to the cell membrane. Its subcellular location is the cytoplasm. The protein localises to the cytoskeleton. In terms of biological role, component of the ankyrin-1 complex, a multiprotein complex involved in the stability and shape of the erythrocyte membrane. In Mus musculus (Mouse), this protein is Protein 4.2.